The sequence spans 488 residues: GTPase Der (488 aa).

EngA-type G domains follow at residues 3–166 (PVVA…AEAM) and 199–372 (IKLA…DSAT). GTP-binding positions include 9–16 (GRPNVGKS), 56–60 (DTGGI), 118–121 (NKID), 205–212 (GKPNVGKS), 252–256 (DTAGV), and 317–320 (NKWD). The KH-like domain maps to 373-457 (RRVSTSMLTR…PIQLRFQEGD (85 aa)).

This sequence belongs to the TRAFAC class TrmE-Era-EngA-EngB-Septin-like GTPase superfamily. EngA (Der) GTPase family. In terms of assembly, associates with the 50S ribosomal subunit.

Its function is as follows. GTPase that plays an essential role in the late steps of ribosome biogenesis. In Shewanella sp. (strain ANA-3), this protein is GTPase Der.